The following is a 152-amino-acid chain: UPF0178 protein YE1167 (152 aa).

The protein belongs to the UPF0178 family.

In Yersinia enterocolitica serotype O:8 / biotype 1B (strain NCTC 13174 / 8081), this protein is UPF0178 protein YE1167.